We begin with the raw amino-acid sequence, 449 residues long: Phosphoglucosamine mutase (449 aa).

Residue Ser-102 is the Phosphoserine intermediate of the active site. The Mg(2+) site is built by Ser-102, Asp-243, Asp-245, and Asp-247. At Ser-102 the chain carries Phosphoserine.

Belongs to the phosphohexose mutase family. It depends on Mg(2+) as a cofactor. In terms of processing, activated by phosphorylation.

The catalysed reaction is alpha-D-glucosamine 1-phosphate = D-glucosamine 6-phosphate. Its function is as follows. Catalyzes the conversion of glucosamine-6-phosphate to glucosamine-1-phosphate. This Maricaulis maris (strain MCS10) (Caulobacter maris) protein is Phosphoglucosamine mutase.